Consider the following 504-residue polypeptide: Anaerobic nitric oxide reductase transcription regulator NorR (504 aa).

Position 57 is a 4-aspartylphosphate (aspartate 57). Residues methionine 187–valine 416 enclose the Sigma-54 factor interaction domain. Residues glycine 215–glutamate 222 and alanine 278–glutamate 287 contribute to the ATP site. The segment at residues tryptophan 479–lysine 498 is a DNA-binding region (H-T-H motif).

Its pathway is nitrogen metabolism; nitric oxide reduction. Required for the expression of anaerobic nitric oxide (NO) reductase, acts as a transcriptional activator for at least the norVW operon. Activation also requires sigma-54. In Escherichia coli O157:H7, this protein is Anaerobic nitric oxide reductase transcription regulator NorR.